Here is a 357-residue protein sequence, read N- to C-terminus: 4-hydroxyphenylpyruvate dioxygenase (357 aa).

2 VOC domains span residues 17 to 137 and 165 to 316; these read GFEF…LVDR and YIDH…IFTD. Residues His-168, His-246, and Glu-325 each contribute to the Fe cation site.

It belongs to the 4HPPD family. In terms of assembly, homotetramer. It depends on Fe cation as a cofactor.

It carries out the reaction 3-(4-hydroxyphenyl)pyruvate + O2 = homogentisate + CO2. It functions in the pathway amino-acid degradation; L-phenylalanine degradation; acetoacetate and fumarate from L-phenylalanine: step 3/6. The sequence is that of 4-hydroxyphenylpyruvate dioxygenase (hpd) from Pseudomonas aeruginosa (strain ATCC 15692 / DSM 22644 / CIP 104116 / JCM 14847 / LMG 12228 / 1C / PRS 101 / PAO1).